Consider the following 1032-residue polypeptide: Caspase recruitment domain-containing protein 10 (1032 aa).

Disordered stretches follow at residues 1 to 23 (MPGRAEAGEAEEEAGAGSGSEAE), 253 to 276 (RARGPPPGAEEKEKEKEKEKEPDN), and 481 to 553 (EFPS…MSDI). Serine 18 carries the phosphoserine modification. The CARD domain maps to 23–115 (EEDALWERIE…EHFTLLTGQE (93 aa)). Residues 138 to 456 (TEVRRLREAR…LEVQLQRAQG (319 aa)) adopt a coiled-coil conformation. 2 stretches are compositionally biased toward basic and acidic residues: residues 261-276 (AEEKEKEKEKEKEPDN) and 504-517 (HNSEEATDSEKEIN).

CARD10 and BCL10 bind to each other by CARD-CARD interaction. They both participate in a complex with MALT1, where MALT1 binds to BCL10. Interacts with TMEM43; this interaction is essential for EGFR-mediated NF-kappa-B activation. In terms of tissue distribution, detected in adult heart, kidney and liver; lower levels in intestine, placenta, muscle and lung. Also found in fetal lung, liver and kidney.

It is found in the cytoplasm. Functionally, scaffold protein that plays an important role in mediating the activation of NF-kappa-B via BCL10 or EGFR. This Homo sapiens (Human) protein is Caspase recruitment domain-containing protein 10 (CARD10).